A 213-amino-acid polypeptide reads, in one-letter code: N-(5'-phosphoribosyl)anthranilate isomerase (213 aa).

The protein belongs to the TrpF family.

The catalysed reaction is N-(5-phospho-beta-D-ribosyl)anthranilate = 1-(2-carboxyphenylamino)-1-deoxy-D-ribulose 5-phosphate. The protein operates within amino-acid biosynthesis; L-tryptophan biosynthesis; L-tryptophan from chorismate: step 3/5. The protein is N-(5'-phosphoribosyl)anthranilate isomerase of Roseiflexus sp. (strain RS-1).